The sequence spans 246 residues: Azurocidin (246 aa).

Residues 1–19 (MPALRFLALLASLLATSRV) form the signal peptide. A propeptide spanning residues 20-26 (GLATLAD) is cleaved from the precursor. Positions 27–242 (IVGGRRAQPQ…FRNWIDSVLN (216 aa)) constitute a Peptidase S1 domain. The cysteines at positions 52 and 68 are disulfide-linked. N-linked (GlcNAc...) asparagine glycans are attached at residues Asn139 and Asn170. Intrachain disulfides connect Cys148–Cys205 and Cys178–Cys184. A propeptide spanning residues 245 to 246 (PA) is cleaved from the precursor.

It belongs to the peptidase S1 family. Elastase subfamily.

The protein localises to the cytoplasmic granule membrane. Its function is as follows. This is a neutrophil granule-derived antibacterial and monocyte- and fibroblast-specific chemotactic glycoprotein. Binds heparin. In Sus scrofa (Pig), this protein is Azurocidin.